Here is a 173-residue protein sequence, read N- to C-terminus: Crossover junction endodeoxyribonuclease RuvC (173 aa).

Active-site residues include aspartate 8, glutamate 67, and aspartate 139. Mg(2+)-binding residues include aspartate 8, glutamate 67, and aspartate 139.

This sequence belongs to the RuvC family. In terms of assembly, homodimer which binds Holliday junction (HJ) DNA. The HJ becomes 2-fold symmetrical on binding to RuvC with unstacked arms; it has a different conformation from HJ DNA in complex with RuvA. In the full resolvosome a probable DNA-RuvA(4)-RuvB(12)-RuvC(2) complex forms which resolves the HJ. It depends on Mg(2+) as a cofactor.

The protein localises to the cytoplasm. The enzyme catalyses Endonucleolytic cleavage at a junction such as a reciprocal single-stranded crossover between two homologous DNA duplexes (Holliday junction).. In terms of biological role, the RuvA-RuvB-RuvC complex processes Holliday junction (HJ) DNA during genetic recombination and DNA repair. Endonuclease that resolves HJ intermediates. Cleaves cruciform DNA by making single-stranded nicks across the HJ at symmetrical positions within the homologous arms, yielding a 5'-phosphate and a 3'-hydroxyl group; requires a central core of homology in the junction. The consensus cleavage sequence is 5'-(A/T)TT(C/G)-3'. Cleavage occurs on the 3'-side of the TT dinucleotide at the point of strand exchange. HJ branch migration catalyzed by RuvA-RuvB allows RuvC to scan DNA until it finds its consensus sequence, where it cleaves and resolves the cruciform DNA. This is Crossover junction endodeoxyribonuclease RuvC from Aeromonas salmonicida (strain A449).